A 529-amino-acid chain; its full sequence is Peptide chain release factor 3 (529 aa).

The region spanning 11-280 (ARRRTFAIIS…GLVEWAPSPM (270 aa)) is the tr-type G domain. Residues 20-27 (SHPDAGKT), 88-92 (DTPGH), and 142-145 (NKLD) each bind GTP.

It belongs to the TRAFAC class translation factor GTPase superfamily. Classic translation factor GTPase family. PrfC subfamily.

The protein resides in the cytoplasm. Its function is as follows. Increases the formation of ribosomal termination complexes and stimulates activities of RF-1 and RF-2. It binds guanine nucleotides and has strong preference for UGA stop codons. It may interact directly with the ribosome. The stimulation of RF-1 and RF-2 is significantly reduced by GTP and GDP, but not by GMP. The sequence is that of Peptide chain release factor 3 from Erwinia tasmaniensis (strain DSM 17950 / CFBP 7177 / CIP 109463 / NCPPB 4357 / Et1/99).